The sequence spans 367 residues: Peptidyl-prolyl cis-trans isomerase D (367 aa).

In terms of domain architecture, PPIase cyclophilin-type spans 7–171 (FFEVAIGGKT…QPVTIVDCGE (165 aa)). TPR repeat units lie at residues 213–246 (IEKLKSIGTKLFKEGNAEGALKKYLKATTYLEDY), 264–297 (ISCYLNVALMALKVNQPKVAIKAATSALDDETVA), and 302–335 (AKALFRRGSGYAALKNETDALKDLNAALELEPAD).

This sequence belongs to the cyclophilin-type PPIase family. PPIase D subfamily.

The protein localises to the cytoplasm. It catalyses the reaction [protein]-peptidylproline (omega=180) = [protein]-peptidylproline (omega=0). PPIases accelerate the folding of proteins. It catalyzes the cis-trans isomerization of proline imidic peptide bonds in oligopeptides. This is Peptidyl-prolyl cis-trans isomerase D (CPR6) from Yarrowia lipolytica (strain CLIB 122 / E 150) (Yeast).